The sequence spans 66 residues: Large ribosomal subunit protein bL35 (66 aa).

It belongs to the bacterial ribosomal protein bL35 family.

The polypeptide is Large ribosomal subunit protein bL35 (Deinococcus deserti (strain DSM 17065 / CIP 109153 / LMG 22923 / VCD115)).